Reading from the N-terminus, the 61-residue chain is Metallothionein-1A (61 aa).

At Met-1 the chain carries N-acetylmethionine. The segment at 1-29 (MDPNCSCPTGGSCSCAGSCTCKACRCPSC) is beta. Positions 5, 7, 13, 15, 19, 21, 24, 26, 29, 33, 34, 36, 37, 41, 44, 48, 50, and 57 each coordinate a divalent metal cation. Residues 30 to 61 (KKSCCSCCPVGCAKCAQGCVCKGASDKCSCCA) are alpha. Ser-58 is subject to Phosphoserine. Residues Cys-59 and Cys-60 each coordinate a divalent metal cation.

This sequence belongs to the metallothionein superfamily. Type 1 family. As to quaternary structure, monomer.

Functionally, metallothioneins have a high content of cysteine residues that bind various heavy metals; these proteins are transcriptionally regulated by both heavy metals and glucocorticoids. This is Metallothionein-1A (MT1A) from Bos taurus (Bovine).